Reading from the N-terminus, the 195-residue chain is Cell division protein SepF (195 aa).

The tract at residues 32–54 (RYSKTNSSETLAPEEEEPIRNRR) is disordered.

Belongs to the SepF family. In terms of assembly, homodimer. Interacts with FtsZ.

Its subcellular location is the cytoplasm. Functionally, cell division protein that is part of the divisome complex and is recruited early to the Z-ring. Probably stimulates Z-ring formation, perhaps through the cross-linking of FtsZ protofilaments. Its function overlaps with FtsA. This chain is Cell division protein SepF, found in Gloeothece citriformis (strain PCC 7424) (Cyanothece sp. (strain PCC 7424)).